The following is a 351-amino-acid chain: Quinolinate phosphoribosyltransferase [decarboxylating] 2b, mitochondrial (351 aa).

Residues R142, 173-175 (TRK), R197, K207, E240, D267, 299-301 (SGN), and 320-322 (SGA) contribute to the substrate site.

Belongs to the NadC/ModD family. Expressed in roots and flowers.

The protein localises to the mitochondrion. It catalyses the reaction nicotinate beta-D-ribonucleotide + CO2 + diphosphate = quinolinate + 5-phospho-alpha-D-ribose 1-diphosphate + 2 H(+). The protein operates within alkaloid biosynthesis; nicotine biosynthesis. Its pathway is cofactor biosynthesis; NAD(+) biosynthesis; nicotinate D-ribonucleotide from quinolinate: step 1/1. Its function is as follows. Involved in the biosynthesis of pyridine alkaloid natural products, leading mainly to the production of anabasine, anatabine, nicotine and nornicotine, effective deterrents against herbivores with antiparasitic and pesticide properties (neurotoxins); nornicotine serves as the precursor in the synthesis of the carcinogen compound N'-nitrosonornicotine (NNN). Involved in the catabolism of quinolinic acid (QA). In Nicotiana tabacum (Common tobacco), this protein is Quinolinate phosphoribosyltransferase [decarboxylating] 2b, mitochondrial.